Consider the following 600-residue polypeptide: Proline--tRNA ligase (600 aa).

This sequence belongs to the class-II aminoacyl-tRNA synthetase family. ProS type 1 subfamily. Homodimer.

It localises to the cytoplasm. It catalyses the reaction tRNA(Pro) + L-proline + ATP = L-prolyl-tRNA(Pro) + AMP + diphosphate. In terms of biological role, catalyzes the attachment of proline to tRNA(Pro) in a two-step reaction: proline is first activated by ATP to form Pro-AMP and then transferred to the acceptor end of tRNA(Pro). As ProRS can inadvertently accommodate and process non-cognate amino acids such as alanine and cysteine, to avoid such errors it has two additional distinct editing activities against alanine. One activity is designated as 'pretransfer' editing and involves the tRNA(Pro)-independent hydrolysis of activated Ala-AMP. The other activity is designated 'posttransfer' editing and involves deacylation of mischarged Ala-tRNA(Pro). The misacylated Cys-tRNA(Pro) is not edited by ProRS. The chain is Proline--tRNA ligase from Gloeothece citriformis (strain PCC 7424) (Cyanothece sp. (strain PCC 7424)).